Reading from the N-terminus, the 441-residue chain is Signal recognition particle 54 kDa protein (441 aa).

Residues 104 to 111 (GLQGSGKT), 186 to 190 (DTAGR), and 244 to 247 (TKLD) each bind GTP.

It belongs to the GTP-binding SRP family. SRP54 subfamily. Part of the signal recognition particle protein translocation system, which is composed of SRP and FtsY. Archaeal SRP consists of a 7S RNA molecule of 300 nucleotides and two protein subunits: SRP54 and SRP19.

The protein resides in the cytoplasm. The enzyme catalyses GTP + H2O = GDP + phosphate + H(+). Involved in targeting and insertion of nascent membrane proteins into the cytoplasmic membrane. Binds to the hydrophobic signal sequence of the ribosome-nascent chain (RNC) as it emerges from the ribosomes. The SRP-RNC complex is then targeted to the cytoplasmic membrane where it interacts with the SRP receptor FtsY. The protein is Signal recognition particle 54 kDa protein of Staphylothermus marinus (strain ATCC 43588 / DSM 3639 / JCM 9404 / F1).